Consider the following 198-residue polypeptide: Ribonuclease HII (198 aa).

The 189-residue stretch at 10–198 (QLVAGVDEVG…PVKRALGLAS (189 aa)) folds into the RNase H type-2 domain. The a divalent metal cation site is built by aspartate 16, glutamate 17, and aspartate 108.

The protein belongs to the RNase HII family. Mn(2+) is required as a cofactor. It depends on Mg(2+) as a cofactor.

It localises to the cytoplasm. It catalyses the reaction Endonucleolytic cleavage to 5'-phosphomonoester.. Endonuclease that specifically degrades the RNA of RNA-DNA hybrids. The protein is Ribonuclease HII of Shigella boydii serotype 18 (strain CDC 3083-94 / BS512).